We begin with the raw amino-acid sequence, 192 residues long: 3-isopropylmalate dehydratase small subunit (192 aa).

Belongs to the LeuD family. LeuD type 1 subfamily. As to quaternary structure, heterodimer of LeuC and LeuD.

It carries out the reaction (2R,3S)-3-isopropylmalate = (2S)-2-isopropylmalate. The protein operates within amino-acid biosynthesis; L-leucine biosynthesis; L-leucine from 3-methyl-2-oxobutanoate: step 2/4. Functionally, catalyzes the isomerization between 2-isopropylmalate and 3-isopropylmalate, via the formation of 2-isopropylmaleate. This Zymomonas mobilis subsp. mobilis (strain ATCC 31821 / ZM4 / CP4) protein is 3-isopropylmalate dehydratase small subunit.